Consider the following 264-residue polypeptide: Small ribosomal subunit protein uS2 (264 aa).

The disordered stretch occupies residues 228 to 264; the sequence is QLDAEDDYEDYDGSEYDDDYEETEYTDAVIPDEETEE. Residues 230 to 264 are compositionally biased toward acidic residues; it reads DAEDDYEDYDGSEYDDDYEETEYTDAVIPDEETEE.

This sequence belongs to the universal ribosomal protein uS2 family.

The sequence is that of Small ribosomal subunit protein uS2 from Nostoc punctiforme (strain ATCC 29133 / PCC 73102).